We begin with the raw amino-acid sequence, 532 residues long: Autoinducer-2 kinase (532 aa).

It belongs to the FGGY kinase family.

The protein localises to the cytoplasm. The catalysed reaction is (S)-4,5-dihydroxypentane-2,3-dione + ATP = (2S)-2-hydroxy-3,4-dioxopentyl phosphate + ADP + H(+). Functionally, catalyzes the phosphorylation of autoinducer-2 (AI-2) to phospho-AI-2, which subsequently inactivates the transcriptional regulator LsrR and leads to the transcription of the lsr operon. Phosphorylates the ring-open form of (S)-4,5-dihydroxypentane-2,3-dione (DPD), which is the precursor to all AI-2 signaling molecules, at the C5 position. The sequence is that of Autoinducer-2 kinase from Klebsiella pneumoniae subsp. pneumoniae (strain ATCC 700721 / MGH 78578).